The chain runs to 66 residues: Large ribosomal subunit protein bL35 (66 aa).

Belongs to the bacterial ribosomal protein bL35 family.

The polypeptide is Large ribosomal subunit protein bL35 (Borrelia garinii subsp. bavariensis (strain ATCC BAA-2496 / DSM 23469 / PBi) (Borreliella bavariensis)).